A 267-amino-acid chain; its full sequence is Tryptophan synthase alpha chain (267 aa).

Active-site proton acceptor residues include glutamate 49 and aspartate 60.

This sequence belongs to the TrpA family. As to quaternary structure, tetramer of two alpha and two beta chains.

The enzyme catalyses (1S,2R)-1-C-(indol-3-yl)glycerol 3-phosphate + L-serine = D-glyceraldehyde 3-phosphate + L-tryptophan + H2O. It functions in the pathway amino-acid biosynthesis; L-tryptophan biosynthesis; L-tryptophan from chorismate: step 5/5. In terms of biological role, the alpha subunit is responsible for the aldol cleavage of indoleglycerol phosphate to indole and glyceraldehyde 3-phosphate. In Solibacter usitatus (strain Ellin6076), this protein is Tryptophan synthase alpha chain.